Consider the following 921-residue polypeptide: uncharacterized protein (921 aa).

Residues 334–628 (MTKRKFLSID…NLKSIYYDFF (295 aa)) form a kinase-like region. Over residues 401–494 (GSSEWSFGSS…NNNNSDGSSG (94 aa)) the composition is skewed to low complexity. Disordered regions lie at residues 401-499 (GSSE…DNRN) and 664-711 (NLYS…NSNS).

This is an uncharacterized protein from Dictyostelium discoideum (Social amoeba).